Consider the following 161-residue polypeptide: 2-C-methyl-D-erythritol 2,4-cyclodiphosphate synthase (161 aa).

A divalent metal cation contacts are provided by Asp10 and His12. 4-CDP-2-C-methyl-D-erythritol 2-phosphate is bound by residues 10-12 (DVH) and 36-37 (HS). His44 lines the a divalent metal cation pocket. Residues 58 to 60 (DIG), 63 to 67 (FPDTD), 102 to 108 (AQAPKMA), 134 to 137 (TTTE), Phe141, and Arg144 each bind 4-CDP-2-C-methyl-D-erythritol 2-phosphate.

This sequence belongs to the IspF family. Homotrimer. It depends on a divalent metal cation as a cofactor.

The catalysed reaction is 4-CDP-2-C-methyl-D-erythritol 2-phosphate = 2-C-methyl-D-erythritol 2,4-cyclic diphosphate + CMP. It functions in the pathway isoprenoid biosynthesis; isopentenyl diphosphate biosynthesis via DXP pathway; isopentenyl diphosphate from 1-deoxy-D-xylulose 5-phosphate: step 4/6. Its function is as follows. Involved in the biosynthesis of isopentenyl diphosphate (IPP) and dimethylallyl diphosphate (DMAPP), two major building blocks of isoprenoid compounds. Catalyzes the conversion of 4-diphosphocytidyl-2-C-methyl-D-erythritol 2-phosphate (CDP-ME2P) to 2-C-methyl-D-erythritol 2,4-cyclodiphosphate (ME-CPP) with a corresponding release of cytidine 5-monophosphate (CMP). In Shewanella sediminis (strain HAW-EB3), this protein is 2-C-methyl-D-erythritol 2,4-cyclodiphosphate synthase.